Consider the following 393-residue polypeptide: Acetylornithine aminotransferase (393 aa).

Residues 96–97 (GT) and Phe129 each bind pyridoxal 5'-phosphate. Arg132 lines the N(2)-acetyl-L-ornithine pocket. 214 to 217 (DEVQ) provides a ligand contact to pyridoxal 5'-phosphate. Lys243 bears the N6-(pyridoxal phosphate)lysine mark. N(2)-acetyl-L-ornithine is bound at residue Ser271. Thr272 contacts pyridoxal 5'-phosphate.

Belongs to the class-III pyridoxal-phosphate-dependent aminotransferase family. ArgD subfamily. In terms of assembly, homodimer. The cofactor is pyridoxal 5'-phosphate.

The protein localises to the cytoplasm. The enzyme catalyses N(2)-acetyl-L-ornithine + 2-oxoglutarate = N-acetyl-L-glutamate 5-semialdehyde + L-glutamate. It functions in the pathway amino-acid biosynthesis; L-arginine biosynthesis; N(2)-acetyl-L-ornithine from L-glutamate: step 4/4. The polypeptide is Acetylornithine aminotransferase (Rhodobacter capsulatus (strain ATCC BAA-309 / NBRC 16581 / SB1003)).